Consider the following 143-residue polypeptide: Large-conductance mechanosensitive channel (143 aa).

2 helical membrane-spanning segments follow: residues 10 to 30 (FAVK…GAFS) and 89 to 109 (GSFI…FLMV).

The protein belongs to the MscL family. Homopentamer.

It is found in the cell inner membrane. In terms of biological role, channel that opens in response to stretch forces in the membrane lipid bilayer. May participate in the regulation of osmotic pressure changes within the cell. The polypeptide is Large-conductance mechanosensitive channel (Burkholderia multivorans (strain ATCC 17616 / 249)).